The primary structure comprises 288 residues: Alpha-acetolactate decarboxylase (288 aa).

The first 23 residues, 1 to 23, serve as a signal peptide directing secretion; it reads MNIKYFLIFLILLAVTSFTLFSG.

Belongs to the alpha-acetolactate decarboxylase family.

The catalysed reaction is (2S)-2-acetolactate + H(+) = (R)-acetoin + CO2. The protein operates within polyol metabolism; (R,R)-butane-2,3-diol biosynthesis; (R,R)-butane-2,3-diol from pyruvate: step 2/3. In terms of biological role, converts acetolactate into acetoin. This is Alpha-acetolactate decarboxylase from Methanosarcina mazei (strain ATCC BAA-159 / DSM 3647 / Goe1 / Go1 / JCM 11833 / OCM 88) (Methanosarcina frisia).